Consider the following 847-residue polypeptide: Follistatin-related protein 5 (847 aa).

Residues 1-20 form the signal peptide; sequence MFKCWSVVLVLGFIFLESEG. Positions 83–135 constitute a Kazal-like domain; the sequence is GQAECACMDLCKRHYKPVCGSDGEFYENHCEVHRAACLKKQKITIVHNEDCFF. Cystine bridges form between Cys-89-Cys-119, Cys-93-Cys-112, and Cys-101-Cys-133. EF-hand domains follow at residues 175-210 and 211-246; these read RKKLLVDQMFKYFDADSNGLVDINELTQVIKQEELG and KDLFDCTLYVLLKYDDFNADKHLALEEFYRAFQVIQ. Ca(2+) contacts are provided by Asp-188, Asp-190, Asn-192, Glu-199, Asp-226, Asn-228, Asp-230, His-232, and Glu-237. 2 Ig-like domains span residues 250–337 and 341–426; these read PEDQ…IFQV and PVIR…EDIS. 2 disulfides stabilise this stretch: Cys-270-Cys-321 and Cys-362-Cys-413. N-linked (GlcNAc...) asparagine glycans are attached at residues Asn-318 and Asn-394.

It is found in the secreted. The sequence is that of Follistatin-related protein 5 (FSTL5) from Homo sapiens (Human).